We begin with the raw amino-acid sequence, 317 residues long: Ribosomal protein L11 methyltransferase (317 aa).

S-adenosyl-L-methionine contacts are provided by threonine 158, glycine 179, aspartate 201, and asparagine 244.

This sequence belongs to the methyltransferase superfamily. PrmA family.

It is found in the cytoplasm. It catalyses the reaction L-lysyl-[protein] + 3 S-adenosyl-L-methionine = N(6),N(6),N(6)-trimethyl-L-lysyl-[protein] + 3 S-adenosyl-L-homocysteine + 3 H(+). Functionally, methylates ribosomal protein L11. The polypeptide is Ribosomal protein L11 methyltransferase (Streptococcus pyogenes serotype M49 (strain NZ131)).